The following is a 255-amino-acid chain: Snake venom serine protease HS112 (255 aa).

The N-terminal stretch at 1–18 (MVLIRVIANLLILQLSYA) is a signal peptide. Positions 19–24 (QKSSEL) are excised as a propeptide. Positions 25-246 (VIGGDECDIN…YLPWIQSIIA (222 aa)) constitute a Peptidase S1 domain. 6 cysteine pairs are disulfide-bonded: C31–C162, C49–C65, C97–C253, C141–C207, C173–C186, and C197–C222. Active-site charge relay system residues include H64 and D109. The N-linked (GlcNAc...) asparagine glycan is linked to N169. The active-site Charge relay system is S201. N-linked (GlcNAc...) asparagine glycosylation is present at N248.

The protein belongs to the peptidase S1 family. Snake venom subfamily. In terms of assembly, monomer. Expressed by the venom gland.

It localises to the secreted. In terms of biological role, snake venom serine protease that may act in the hemostasis system of the prey. The polypeptide is Snake venom serine protease HS112 (Bothrops jararaca (Jararaca)).